The chain runs to 491 residues: Ketol-acid reductoisomerase (NADP(+)) (491 aa).

The region spanning Ala-15–Ser-208 is the KARI N-terminal Rossmann domain. NADP(+) contacts are provided by residues Cys-45–Gln-48, Arg-68, Arg-76, Ser-78, and Asp-108–Gln-110. The active site involves His-132. Position 158 (Gly-158) interacts with NADP(+). 2 KARI C-terminal knotted domains span residues Ser-209–Gln-344 and Tyr-345–Met-484. Mg(2+)-binding residues include Asp-217, Glu-221, Glu-389, and Glu-393. Ser-414 provides a ligand contact to substrate.

It belongs to the ketol-acid reductoisomerase family. It depends on Mg(2+) as a cofactor.

The enzyme catalyses (2R)-2,3-dihydroxy-3-methylbutanoate + NADP(+) = (2S)-2-acetolactate + NADPH + H(+). It catalyses the reaction (2R,3R)-2,3-dihydroxy-3-methylpentanoate + NADP(+) = (S)-2-ethyl-2-hydroxy-3-oxobutanoate + NADPH + H(+). The protein operates within amino-acid biosynthesis; L-isoleucine biosynthesis; L-isoleucine from 2-oxobutanoate: step 2/4. Its pathway is amino-acid biosynthesis; L-valine biosynthesis; L-valine from pyruvate: step 2/4. Its function is as follows. Involved in the biosynthesis of branched-chain amino acids (BCAA). Catalyzes an alkyl-migration followed by a ketol-acid reduction of (S)-2-acetolactate (S2AL) to yield (R)-2,3-dihydroxy-isovalerate. In the isomerase reaction, S2AL is rearranged via a Mg-dependent methyl migration to produce 3-hydroxy-3-methyl-2-ketobutyrate (HMKB). In the reductase reaction, this 2-ketoacid undergoes a metal-dependent reduction by NADPH to yield (R)-2,3-dihydroxy-isovalerate. The sequence is that of Ketol-acid reductoisomerase (NADP(+)) from Klebsiella pneumoniae (strain 342).